A 325-amino-acid chain; its full sequence is Thiamine-monophosphate kinase (325 aa).

The Mg(2+) site is built by D30, S45, T46, and D47. H54 lines the substrate pocket. 2 residues coordinate Mg(2+): D75 and D122. ATP-binding positions include 121-122 and R146; that span reads GD. D212 provides a ligand contact to Mg(2+). S214 lines the ATP pocket. A Mg(2+)-binding site is contributed by D215. Residues E263 and Y319 each contribute to the substrate site.

It belongs to the thiamine-monophosphate kinase family.

The enzyme catalyses thiamine phosphate + ATP = thiamine diphosphate + ADP. It participates in cofactor biosynthesis; thiamine diphosphate biosynthesis; thiamine diphosphate from thiamine phosphate: step 1/1. With respect to regulation, is markedly activated by the monovalent cations K(+), NH(4)(+), and Rb(+). Is significantly inhibited by ADP, AMP, p-chloromercuribenzoate, N-ethylmaleimide, pyrophosphate, and EDTA. Its function is as follows. Catalyzes the ATP-dependent phosphorylation of thiamine-monophosphate (TMP) to form thiamine-pyrophosphate (TPP), the active form of vitamin B1. Cannot use thiamine as substrate. Is highly specific for ATP as phosphate donor. The polypeptide is Thiamine-monophosphate kinase (thiL) (Escherichia coli (strain K12)).